Reading from the N-terminus, the 525-residue chain is Protein disulfide-isomerase A2 (525 aa).

Residues 1–21 form the signal peptide; sequence MSCQLLPVLLLLLLRASCPWG. The region spanning 27–152 is the Thioredoxin 1 domain; sequence RSPSEEPPEE…IAEWLRRRVG (126 aa). Residues cysteine 71 and cysteine 74 each act as nucleophile in the active site. Cysteines 71 and 74 form a disulfide. 2 N-linked (GlcNAc...) asparagine glycosylation sites follow: asparagine 127 and asparagine 284. The 130-residue stretch at 367 to 496 folds into the Thioredoxin 2 domain; it reads VLNGQVKPYL…FSKFLDNGGV (130 aa). Residues cysteine 418 and cysteine 421 each act as nucleophile in the active site. Cysteine 418 and cysteine 421 are disulfide-bonded. The disordered stretch occupies residues 498–525; the sequence is PTEEPLEEPAAPFPEPPANSTMGSKEEL. N-linked (GlcNAc...) asparagine glycosylation occurs at asparagine 516. Residues 516 to 525 are compositionally biased toward polar residues; sequence NSTMGSKEEL. The short motif at 522–525 is the Prevents secretion from ER element; sequence KEEL.

Belongs to the protein disulfide isomerase family. Monomer; predominantly as monomer under reducing conditions. Homodimer; disulfide-linked. Part of a large chaperone multiprotein complex comprising DNAJB11, HSP90B1, HSPA5, HYOU, PDIA2, PDIA4, PDIA6, PPIB, SDF2L1, UGGT1 and very small amounts of ERP29, but not, or at very low levels, CALR nor CANX. In terms of processing, the disulfide-linked homodimer exhibits an enhanced chaperone activity. Glycosylated.

The protein resides in the endoplasmic reticulum lumen. The catalysed reaction is Catalyzes the rearrangement of -S-S- bonds in proteins.. In terms of biological role, acts as an intracellular estrogen-binding protein. May be involved in modulating cellular levels and biological functions of estrogens in the pancreas. May act as a chaperone that inhibits aggregation of misfolded proteins. The chain is Protein disulfide-isomerase A2 (PDIA2) from Pongo abelii (Sumatran orangutan).